Reading from the N-terminus, the 686-residue chain is DNA ligase 2 (686 aa).

NAD(+) contacts are provided by residues 37–41, 86–87, and Glu121; these read DDEYD and SL. Lys123 acts as the N6-AMP-lysine intermediate in catalysis. Arg144, Glu179, Lys295, and Lys319 together coordinate NAD(+). The Zn(2+) site is built by Cys413, Cys416, Cys431, and Cys436. The 89-residue stretch at 593–681 folds into the BRCT domain; the sequence is VRGEQLAGLN…GVQLPGVQAS (89 aa).

Belongs to the NAD-dependent DNA ligase family. LigA subfamily. The cofactor is Mg(2+). Mn(2+) is required as a cofactor.

The enzyme catalyses NAD(+) + (deoxyribonucleotide)n-3'-hydroxyl + 5'-phospho-(deoxyribonucleotide)m = (deoxyribonucleotide)n+m + AMP + beta-nicotinamide D-nucleotide.. Functionally, DNA ligase that catalyzes the formation of phosphodiester linkages between 5'-phosphoryl and 3'-hydroxyl groups in double-stranded DNA using NAD as a coenzyme and as the energy source for the reaction. It is essential for DNA replication and repair of damaged DNA. The polypeptide is DNA ligase 2 (Deinococcus deserti (strain DSM 17065 / CIP 109153 / LMG 22923 / VCD115)).